A 300-amino-acid polypeptide reads, in one-letter code: Acetaldehyde dehydrogenase 3 (300 aa).

An NAD(+)-binding site is contributed by 11–14 (SGNI). Residue C126 is the Acyl-thioester intermediate of the active site. NAD(+)-binding positions include 157 to 165 (SAGPGTRAN) and N276.

This sequence belongs to the acetaldehyde dehydrogenase family.

It carries out the reaction acetaldehyde + NAD(+) + CoA = acetyl-CoA + NADH + H(+). The polypeptide is Acetaldehyde dehydrogenase 3 (Rhodococcus opacus (strain B4)).